A 303-amino-acid polypeptide reads, in one-letter code: Glutamyl-Q tRNA(Asp) synthetase (303 aa).

L-glutamate contacts are provided by residues 16 to 20 and Glu52; that span reads RFAPS. The 'HIGH' region motif lies at 19 to 29; the sequence is PSPSGPLHFGS. Zn(2+)-binding residues include Cys108, Cys110, Tyr122, and Cys126. Residues Tyr177 and Arg195 each coordinate L-glutamate. A 'KMSKS' region motif is present at residues 233–237; sequence KLSKQ. Lys236 contacts ATP.

Belongs to the class-I aminoacyl-tRNA synthetase family. GluQ subfamily. Requires Zn(2+) as cofactor.

Its function is as follows. Catalyzes the tRNA-independent activation of glutamate in presence of ATP and the subsequent transfer of glutamate onto a tRNA(Asp). Glutamate is transferred on the 2-amino-5-(4,5-dihydroxy-2-cyclopenten-1-yl) moiety of the queuosine in the wobble position of the QUC anticodon. The chain is Glutamyl-Q tRNA(Asp) synthetase from Vibrio vulnificus (strain YJ016).